We begin with the raw amino-acid sequence, 241 residues long: tRNA (guanine-N(7)-)-methyltransferase (241 aa).

Residues Glu-76, Glu-101, Asp-128, and Asp-150 each coordinate S-adenosyl-L-methionine. Asp-150 is a catalytic residue. Residues Lys-154, Asp-186, and 219 to 222 (TRYE) contribute to the substrate site.

The protein belongs to the class I-like SAM-binding methyltransferase superfamily. TrmB family.

It carries out the reaction guanosine(46) in tRNA + S-adenosyl-L-methionine = N(7)-methylguanosine(46) in tRNA + S-adenosyl-L-homocysteine. It participates in tRNA modification; N(7)-methylguanine-tRNA biosynthesis. Functionally, catalyzes the formation of N(7)-methylguanine at position 46 (m7G46) in tRNA. In Cereibacter sphaeroides (strain ATCC 17023 / DSM 158 / JCM 6121 / CCUG 31486 / LMG 2827 / NBRC 12203 / NCIMB 8253 / ATH 2.4.1.) (Rhodobacter sphaeroides), this protein is tRNA (guanine-N(7)-)-methyltransferase.